The chain runs to 300 residues: Ribosomal protein L11 methyltransferase (300 aa).

Thr-147, Gly-168, Asp-190, and Asn-236 together coordinate S-adenosyl-L-methionine.

This sequence belongs to the methyltransferase superfamily. PrmA family.

The protein resides in the cytoplasm. It catalyses the reaction L-lysyl-[protein] + 3 S-adenosyl-L-methionine = N(6),N(6),N(6)-trimethyl-L-lysyl-[protein] + 3 S-adenosyl-L-homocysteine + 3 H(+). Functionally, methylates ribosomal protein L11. The sequence is that of Ribosomal protein L11 methyltransferase from Leptospira borgpetersenii serovar Hardjo-bovis (strain JB197).